The sequence spans 131 residues: Large ribosomal subunit protein bL17 (131 aa).

It belongs to the bacterial ribosomal protein bL17 family. As to quaternary structure, part of the 50S ribosomal subunit. Contacts protein L32.

This chain is Large ribosomal subunit protein bL17, found in Teredinibacter turnerae (strain ATCC 39867 / T7901).